The following is a 288-amino-acid chain: Acetyl-coenzyme A carboxylase carboxyl transferase subunit beta (288 aa).

In terms of domain architecture, CoA carboxyltransferase N-terminal spans 34–288; it reads LFSKCPACKV…RLLRMHGGVR (255 aa). Positions 38, 41, 56, and 59 each coordinate Zn(2+). The C4-type zinc finger occupies 38 to 59; that stretch reads CPACKVILYKNDLGLEKTCQHC.

This sequence belongs to the AccD/PCCB family. Acetyl-CoA carboxylase is a heterohexamer composed of biotin carboxyl carrier protein (AccB), biotin carboxylase (AccC) and two subunits each of ACCase subunit alpha (AccA) and ACCase subunit beta (AccD). Zn(2+) serves as cofactor.

The protein localises to the cytoplasm. The catalysed reaction is N(6)-carboxybiotinyl-L-lysyl-[protein] + acetyl-CoA = N(6)-biotinyl-L-lysyl-[protein] + malonyl-CoA. The protein operates within lipid metabolism; malonyl-CoA biosynthesis; malonyl-CoA from acetyl-CoA: step 1/1. In terms of biological role, component of the acetyl coenzyme A carboxylase (ACC) complex. Biotin carboxylase (BC) catalyzes the carboxylation of biotin on its carrier protein (BCCP) and then the CO(2) group is transferred by the transcarboxylase to acetyl-CoA to form malonyl-CoA. This chain is Acetyl-coenzyme A carboxylase carboxyl transferase subunit beta, found in Streptococcus suis (strain 98HAH33).